The primary structure comprises 155 residues: MDNIDEDLTPEQIAVLQKAFNSFDHQKTGSIPTEMVADILRLMGQPFDRQILDELIDEVDEDKSGRLEFEEFVQLAAKFIVEEDDEAMQKELREAFRLYDKQGNGYIPTSCLKEILKELDDQLTEQELDIMIEEIDSDGSGTVDFDEFMEMMTGE.

EF-hand domains are found at residues 11-46, 47-82, 87-122, and 123-155; these read EQIA…MGQP, FDRQ…FIVE, AMQK…LDDQ, and LTEQ…MTGE. Residues D60, D62, S64, R66, and E71 each coordinate Ca(2+). Residues D136, D138, S140, T142, and E147 each coordinate Ca(2+).

This sequence belongs to the troponin C family. Accumulates almost exclusively in larval muscles.

This Drosophila melanogaster (Fruit fly) protein is Troponin C, isoform 2 (TpnC47D).